Consider the following 597-residue polypeptide: Leukocyte immunoglobulin-like receptor subfamily B member 2 (597 aa).

The N-terminal stretch at Met-1–Val-21 is a signal peptide. The Extracellular segment spans residues Gln-22–Val-460. Ig-like C2-type domains follow at residues Pro-27–Ser-110, Asp-111–Val-229, Gln-230–Thr-318, and Gln-330–Ser-419. Cystine bridges form between Cys-49/Cys-98, Cys-144/Cys-196, Cys-156/Cys-166, and Cys-245/Cys-296. N-linked (GlcNAc...) asparagine glycosylation is found at Asn-280, Asn-301, and Asn-340. A disulfide bridge connects residues Cys-345 and Cys-396. A disordered region spans residues Val-417–Gln-451. The helical transmembrane segment at Val-461–Ile-481 threads the bilayer. Residues Leu-482–His-597 are Cytoplasmic-facing. The tract at residues Trp-491–Ala-523 is disordered. 3 consecutive short sequence motifs (ITIM motif) follow at residues Asn-530 to Val-535, Val-559 to Leu-564, and Ser-589 to Leu-594. The tract at residues Asp-537–His-597 is disordered.

As to quaternary structure, binds PTPN6 when phosphorylated. Binds FCGR1A. Interacts with peptide-bound HLA-G-B2M; this interaction is direct. Interacts with peptide-bound HLA-F-B2M; this interaction is direct. Post-translationally, phosphorylated on tyrosine residues. Dephosphorylated by PTPN6. As to expression, expressed in monocytes and at lower levels in myeloid and plasmacytoid dendritic cells. Expressed in tolerogenic IL10-producing dendritic cells. Expressed in myeloid-derived suppressor cells during pregnancy. Detected at low levels in natural killer (NK) cells. Expressed in B cells.

It is found in the cell membrane. In terms of biological role, receptor for class I MHC antigens. Recognizes a broad spectrum of HLA-A, HLA-B, HLA-C, HLA-G and HLA-F alleles. Involved in the down-regulation of the immune response and the development of tolerance. Recognizes HLA-G in complex with B2M/beta-2 microglobulin and a nonamer self-peptide (peptide-bound HLA-G-B2M) triggering differentiation of type 1 regulatory T cells and myeloid-derived suppressor cells, both of which actively maintain maternal-fetal tolerance. Competes with CD8A for binding to class I MHC antigens. Inhibits FCGR1A-mediated phosphorylation of cellular proteins and mobilization of intracellular calcium ions. This Homo sapiens (Human) protein is Leukocyte immunoglobulin-like receptor subfamily B member 2.